We begin with the raw amino-acid sequence, 150 residues long: Ribonuclease HI (150 aa).

Positions 1–141 (MKLINAYTDG…VDVLARGQAM (141 aa)) constitute an RNase H type-1 domain. Residues Asp-9, Glu-47, Asp-69, and Asp-133 each contribute to the Mg(2+) site.

The protein belongs to the RNase H family. As to quaternary structure, monomer. Requires Mg(2+) as cofactor.

It localises to the cytoplasm. The catalysed reaction is Endonucleolytic cleavage to 5'-phosphomonoester.. Endonuclease that specifically degrades the RNA of RNA-DNA hybrids. This chain is Ribonuclease HI, found in Xylella fastidiosa (strain Temecula1 / ATCC 700964).